The sequence spans 265 residues: 3-methyl-2-oxobutanoate hydroxymethyltransferase (265 aa).

Aspartate 44 and aspartate 83 together coordinate Mg(2+). 3-methyl-2-oxobutanoate contacts are provided by residues 44-45 (DS), aspartate 83, and lysine 113. Residue glutamate 115 coordinates Mg(2+). Glutamate 182 acts as the Proton acceptor in catalysis.

It belongs to the PanB family. As to quaternary structure, homodecamer; pentamer of dimers. Requires Mg(2+) as cofactor.

The protein resides in the cytoplasm. It catalyses the reaction 3-methyl-2-oxobutanoate + (6R)-5,10-methylene-5,6,7,8-tetrahydrofolate + H2O = 2-dehydropantoate + (6S)-5,6,7,8-tetrahydrofolate. The protein operates within cofactor biosynthesis; (R)-pantothenate biosynthesis; (R)-pantoate from 3-methyl-2-oxobutanoate: step 1/2. In terms of biological role, catalyzes the reversible reaction in which hydroxymethyl group from 5,10-methylenetetrahydrofolate is transferred onto alpha-ketoisovalerate to form ketopantoate. This chain is 3-methyl-2-oxobutanoate hydroxymethyltransferase, found in Aquifex aeolicus (strain VF5).